The following is a 1438-amino-acid chain: DNA polymerase III PolC-type (1438 aa).

An Exonuclease domain is found at 422-578 (YVVFDVETTG…YDTESTAYIF (157 aa)).

It belongs to the DNA polymerase type-C family. PolC subfamily.

The protein resides in the cytoplasm. The enzyme catalyses DNA(n) + a 2'-deoxyribonucleoside 5'-triphosphate = DNA(n+1) + diphosphate. In terms of biological role, required for replicative DNA synthesis. This DNA polymerase also exhibits 3' to 5' exonuclease activity. This is DNA polymerase III PolC-type from Staphylococcus haemolyticus (strain JCSC1435).